A 390-amino-acid polypeptide reads, in one-letter code: uncharacterized protein (390 aa).

11 helical membrane passes run 10-30, 43-63, 81-101, 134-154, 162-182, 213-233, 246-266, 272-292, 298-318, 341-361, and 363-383; these read LSFC…LPIL, FLIG…QIPF, FMFF…GLII, AIGV…PIIV, IFWI…FFVP, FYLG…MIPN, WKVY…FIFY, ILEN…IIFL, LLFL…LEVF, TSQF…YSFL, and FSQI…FSFF.

It belongs to the major facilitator superfamily.

The protein localises to the cell membrane. This is an uncharacterized protein from Buchnera aphidicola subsp. Acyrthosiphon pisum (strain APS) (Acyrthosiphon pisum symbiotic bacterium).